The chain runs to 237 residues: Pyrimidine 5'-nucleotidase PynA (237 aa).

Residue aspartate 9 is the Nucleophile of the active site. Aspartate 9, aspartate 11, and aspartate 181 together coordinate Mg(2+). The Proton donor role is filled by aspartate 11.

Belongs to the HAD-like hydrolase superfamily. YjjG family. Homodimer. The cofactor is Mg(2+). It depends on Mn(2+) as a cofactor.

The protein localises to the cytoplasm. The catalysed reaction is a ribonucleoside 5'-phosphate + H2O = a ribonucleoside + phosphate. Its function is as follows. Nucleotidase that shows high phosphatase activity toward non-canonical pyrimidine nucleotides and three canonical nucleoside 5'-monophosphates (UMP, dUMP and dTMP), and no activity against IMP, UDP, GMP, AMP, UTP or pNPP. Appears to function as a house-cleaning nucleotidase in vivo, since the general nucleotidase activity of it allows it to protect cells against non-canonical pyrimidine derivatives such as 5-fluoro-2'-deoxyuridine monophosphate (5-FdUMP), and prevents the incorporation of potentially mutagenic nucleotides such as 5-bromo-2'-deoxyuridine (5-BrdU) into DNA. Is strictly specific to pyrimidine substrates with 5'-monophosphates and shows no activity against nucleoside di- and triphosphates. This chain is Pyrimidine 5'-nucleotidase PynA, found in Streptococcus pneumoniae (strain ATCC BAA-255 / R6).